A 418-amino-acid polypeptide reads, in one-letter code: 1-deoxy-D-xylulose 5-phosphate reductoisomerase (418 aa).

Residues T32, G33, S34, I35, and N150 each contribute to the NADPH site. Residue K151 coordinates 1-deoxy-D-xylulose 5-phosphate. E152 serves as a coordination point for NADPH. D174 is a binding site for Mn(2+). Residues S175, E176, S200, and H223 each coordinate 1-deoxy-D-xylulose 5-phosphate. A Mn(2+)-binding site is contributed by E176. NADPH is bound at residue G229. The 1-deoxy-D-xylulose 5-phosphate site is built by S236, N241, K242, and E245. Position 245 (E245) interacts with Mn(2+).

Belongs to the DXR family. The cofactor is Mg(2+). Mn(2+) serves as cofactor.

The enzyme catalyses 2-C-methyl-D-erythritol 4-phosphate + NADP(+) = 1-deoxy-D-xylulose 5-phosphate + NADPH + H(+). The protein operates within isoprenoid biosynthesis; isopentenyl diphosphate biosynthesis via DXP pathway; isopentenyl diphosphate from 1-deoxy-D-xylulose 5-phosphate: step 1/6. In terms of biological role, catalyzes the NADPH-dependent rearrangement and reduction of 1-deoxy-D-xylulose-5-phosphate (DXP) to 2-C-methyl-D-erythritol 4-phosphate (MEP). This chain is 1-deoxy-D-xylulose 5-phosphate reductoisomerase, found in Streptomyces coelicolor (strain ATCC BAA-471 / A3(2) / M145).